The chain runs to 209 residues: Protein-L-isoaspartate O-methyltransferase (209 aa).

Serine 59 is a catalytic residue.

This sequence belongs to the methyltransferase superfamily. L-isoaspartyl/D-aspartyl protein methyltransferase family.

The protein localises to the cytoplasm. The enzyme catalyses [protein]-L-isoaspartate + S-adenosyl-L-methionine = [protein]-L-isoaspartate alpha-methyl ester + S-adenosyl-L-homocysteine. Functionally, catalyzes the methyl esterification of L-isoaspartyl residues in peptides and proteins that result from spontaneous decomposition of normal L-aspartyl and L-asparaginyl residues. It plays a role in the repair and/or degradation of damaged proteins. The polypeptide is Protein-L-isoaspartate O-methyltransferase (Helicobacter pylori (strain P12)).